The primary structure comprises 213 residues: MKFFIDTANLEEIKHAHELGILAGVTTNPSLVAKENVSFHDRLREITSIVSGSVSAEVISTDAPGMIEEGEELAKIAPNITIKVPMTPEGLKAVKAFSEKGIKTNVTLVFTANQALLAARAGATYVSPFLGRLDDIGHNGLELISTIADIFNIHGIETEIIAASIRHPHHVTEAALRGAHIATVPYKVLMQLFNHPLTDQGIEKFLADWNRQQ.

Catalysis depends on Lys-83, which acts as the Schiff-base intermediate with substrate.

Belongs to the transaldolase family. Type 3B subfamily.

The protein resides in the cytoplasm. The catalysed reaction is D-sedoheptulose 7-phosphate + D-glyceraldehyde 3-phosphate = D-erythrose 4-phosphate + beta-D-fructose 6-phosphate. It functions in the pathway carbohydrate degradation; pentose phosphate pathway; D-glyceraldehyde 3-phosphate and beta-D-fructose 6-phosphate from D-ribose 5-phosphate and D-xylulose 5-phosphate (non-oxidative stage): step 2/3. In terms of biological role, transaldolase is important for the balance of metabolites in the pentose-phosphate pathway. The chain is Probable transaldolase from Geobacillus thermodenitrificans (strain NG80-2).